The primary structure comprises 379 residues: Deoxyuridine 5'-triphosphate nucleotidohydrolase (379 aa).

This sequence belongs to the dUTPase family. The cofactor is Mg(2+).

It carries out the reaction dUTP + H2O = dUMP + diphosphate + H(+). Involved in nucleotide metabolism: produces dUMP, the immediate precursor of thymidine nucleotides and decreases the intracellular concentration of dUTP to avoid uracil incorporation into viral DNA. The sequence is that of Deoxyuridine 5'-triphosphate nucleotidohydrolase from Human herpesvirus 7 (strain JI) (HHV-7).